The chain runs to 1151 residues: UDP-N-acetylglucosamine--peptide N-acetylglucosaminyltransferase (1151 aa).

TPR repeat units lie at residues 125-158 (LKKV…DPNN), 193-226 (AEAY…KPEF), 227-260 (IDAY…NPDL), 261-294 (YCVR…QPQF), 295-328 (AVAW…DPNF), 329-362 (LDAY…SGNH), 363-396 (AVVH…QPHF), 397-430 (PDAY…CPTH), 431-464 (ADSQ…YPEF), 465-498 (AAAH…APTF), 499-532 (ADAY…NPAF), and 533-566 (ADAH…KPDF). A TPR 13; truncated repeat occupies 567-577 (PDAYCNLAHCH). The Nuclear localization signal motif lies at 591–607 (RKLVQIVEDQLCKKRLP). H612 acts as the Proton acceptor in catalysis. UDP-binding positions include Q954, K957, 1010–1013 (VAAK), 1016–1019 (HVRR), 1034–1036 (GHT), and D1040.

Belongs to the glycosyltransferase 41 family. O-GlcNAc transferase subfamily.

The protein resides in the nucleus. It localises to the cytoplasm. Its subcellular location is the perinuclear region. The enzyme catalyses L-seryl-[protein] + UDP-N-acetyl-alpha-D-glucosamine = 3-O-(N-acetyl-beta-D-glucosaminyl)-L-seryl-[protein] + UDP + H(+). It carries out the reaction L-threonyl-[protein] + UDP-N-acetyl-alpha-D-glucosamine = 3-O-(N-acetyl-beta-D-glucosaminyl)-L-threonyl-[protein] + UDP + H(+). It participates in protein modification; protein glycosylation. Functionally, addition of nucleotide-activated sugars directly onto the polypeptide through O-glycosidic linkage with the hydroxyl of serine or threonine. Influences tap habituation in the mechanosensory neurons cell autonomously. The polypeptide is UDP-N-acetylglucosamine--peptide N-acetylglucosaminyltransferase (ogt-1) (Caenorhabditis elegans).